We begin with the raw amino-acid sequence, 229 residues long: Lipoprotein-releasing system ATP-binding protein LolD (229 aa).

Residues 7 to 229 form the ABC transporter domain; the sequence is LKCKNVTKTY…KNGKLYKKNL (223 aa). 43 to 50 is an ATP binding site; it reads GDSGSGKS.

The protein belongs to the ABC transporter superfamily. Lipoprotein translocase (TC 3.A.1.125) family. The complex is composed of two ATP-binding proteins (LolD) and two transmembrane proteins (LolC and LolE).

The protein resides in the cell membrane. Part of the ABC transporter complex LolCDE involved in the translocation of lipoproteins, in an ATP-dependent manner. This is Lipoprotein-releasing system ATP-binding protein LolD from Wigglesworthia glossinidia brevipalpis.